The chain runs to 212 residues: UPF0111 protein PH1389 (212 aa).

This sequence belongs to the UPF0111 family.

In Pyrococcus horikoshii (strain ATCC 700860 / DSM 12428 / JCM 9974 / NBRC 100139 / OT-3), this protein is UPF0111 protein PH1389.